The sequence spans 222 residues: Methylthioribulose-1-phosphate dehydratase (222 aa).

Zn(2+) contacts are provided by histidine 94 and histidine 96.

This sequence belongs to the aldolase class II family. MtnB subfamily. Zn(2+) is required as a cofactor.

It carries out the reaction 5-(methylsulfanyl)-D-ribulose 1-phosphate = 5-methylsulfanyl-2,3-dioxopentyl phosphate + H2O. Its pathway is amino-acid biosynthesis; L-methionine biosynthesis via salvage pathway; L-methionine from S-methyl-5-thio-alpha-D-ribose 1-phosphate: step 2/6. In terms of biological role, catalyzes the dehydration of methylthioribulose-1-phosphate (MTRu-1-P) into 2,3-diketo-5-methylthiopentyl-1-phosphate (DK-MTP-1-P). The polypeptide is Methylthioribulose-1-phosphate dehydratase (Yersinia pseudotuberculosis serotype O:1b (strain IP 31758)).